A 98-amino-acid chain; its full sequence is Integration host factor subunit alpha (98 aa).

This sequence belongs to the bacterial histone-like protein family. In terms of assembly, heterodimer of an alpha and a beta chain.

Its function is as follows. This protein is one of the two subunits of integration host factor, a specific DNA-binding protein that functions in genetic recombination as well as in transcriptional and translational control. This is Integration host factor subunit alpha from Acinetobacter baumannii (strain AB307-0294).